A 384-amino-acid polypeptide reads, in one-letter code: Probable tRNA sulfurtransferase (384 aa).

In terms of domain architecture, THUMP spans 57-160 (EEVVDRVRNV…KKTYIYSKRI (104 aa)). Residues 177 to 178 (ML), 202 to 203 (YF), arginine 259, glycine 281, and glutamine 290 contribute to the ATP site.

This sequence belongs to the ThiI family.

The protein localises to the cytoplasm. The enzyme catalyses [ThiI sulfur-carrier protein]-S-sulfanyl-L-cysteine + a uridine in tRNA + 2 reduced [2Fe-2S]-[ferredoxin] + ATP + H(+) = [ThiI sulfur-carrier protein]-L-cysteine + a 4-thiouridine in tRNA + 2 oxidized [2Fe-2S]-[ferredoxin] + AMP + diphosphate. It catalyses the reaction [ThiS sulfur-carrier protein]-C-terminal Gly-Gly-AMP + S-sulfanyl-L-cysteinyl-[cysteine desulfurase] + AH2 = [ThiS sulfur-carrier protein]-C-terminal-Gly-aminoethanethioate + L-cysteinyl-[cysteine desulfurase] + A + AMP + 2 H(+). Its pathway is cofactor biosynthesis; thiamine diphosphate biosynthesis. Catalyzes the ATP-dependent transfer of a sulfur to tRNA to produce 4-thiouridine in position 8 of tRNAs, which functions as a near-UV photosensor. Also catalyzes the transfer of sulfur to the sulfur carrier protein ThiS, forming ThiS-thiocarboxylate. This is a step in the synthesis of thiazole, in the thiamine biosynthesis pathway. The sulfur is donated as persulfide by IscS. The chain is Probable tRNA sulfurtransferase from Clostridium acetobutylicum (strain ATCC 824 / DSM 792 / JCM 1419 / IAM 19013 / LMG 5710 / NBRC 13948 / NRRL B-527 / VKM B-1787 / 2291 / W).